Reading from the N-terminus, the 1032-residue chain is Putative oxidoreductase YgfK (1032 aa).

Residues 928 to 958 (RFQTLHLDAYCNECGNCAQFCPWNGKPYKDK) enclose the 4Fe-4S ferredoxin-type domain. [4Fe-4S] cluster is bound by residues cysteine 938, cysteine 941, cysteine 944, and cysteine 948.

Requires [4Fe-4S] cluster as cofactor.

Could be an iron-sulfur flavoprotein with NADPH:O(2) oxidoreductase activity. This is Putative oxidoreductase YgfK (ygfK) from Escherichia coli (strain K12).